We begin with the raw amino-acid sequence, 166 residues long: MSAIIEAKKQQVDTIAEQLKNSVSTVIVDYRGLTVAEVTELRSQLREAGVEYKVYKNTMVRRAAEQAGIEGLDEFLTGPTAIATSTEDVVAPAKVIAGFAKEHEALEVKTGVMEGNVISAEEVKTVGSLPSHDGLVSMLLSVLQAPVRNFAYAVKAVGEQKEESAE.

This sequence belongs to the universal ribosomal protein uL10 family. As to quaternary structure, part of the ribosomal stalk of the 50S ribosomal subunit. The N-terminus interacts with L11 and the large rRNA to form the base of the stalk. The C-terminus forms an elongated spine to which L12 dimers bind in a sequential fashion forming a multimeric L10(L12)X complex.

Functionally, forms part of the ribosomal stalk, playing a central role in the interaction of the ribosome with GTP-bound translation factors. The sequence is that of Large ribosomal subunit protein uL10 from Staphylococcus epidermidis (strain ATCC 35984 / DSM 28319 / BCRC 17069 / CCUG 31568 / BM 3577 / RP62A).